The primary structure comprises 345 residues: Aspartate--ammonia ligase (345 aa).

This sequence belongs to the class-II aminoacyl-tRNA synthetase family. AsnA subfamily.

It is found in the cytoplasm. The catalysed reaction is L-aspartate + NH4(+) + ATP = L-asparagine + AMP + diphosphate + H(+). Its pathway is amino-acid biosynthesis; L-asparagine biosynthesis; L-asparagine from L-aspartate (ammonia route): step 1/1. The polypeptide is Aspartate--ammonia ligase (Bacteroides fragilis (strain ATCC 25285 / DSM 2151 / CCUG 4856 / JCM 11019 / LMG 10263 / NCTC 9343 / Onslow / VPI 2553 / EN-2)).